A 746-amino-acid polypeptide reads, in one-letter code: NAD(P)H-quinone oxidoreductase subunit 5, chloroplastic (746 aa).

16 helical membrane-spanning segments follow: residues 9-29, 40-60, 89-109, 125-145, 147-167, 185-205, 221-241, 258-278, 280-300, 327-347, 354-374, 396-416, 425-445, 547-567, 608-628, and 723-743; these read WIIP…LLLF, WTFL…YLSI, IDPL…LVLI, FAYM…SNLI, VYFF…FWFT, GDFG…SFEF, VNFL…IAKS, TPIS…FLVA, LLPL…IGII, LGYM…FHLI, ALLF…VGYS, TAFL…CFWS, LLFS…TAFY, ILFP…IGIP, FSVS…KPFY, and YLFL…FFYF.

Belongs to the complex I subunit 5 family. NDH is composed of at least 16 different subunits, 5 of which are encoded in the nucleus.

It is found in the plastid. The protein resides in the chloroplast thylakoid membrane. The enzyme catalyses a plastoquinone + NADH + (n+1) H(+)(in) = a plastoquinol + NAD(+) + n H(+)(out). It carries out the reaction a plastoquinone + NADPH + (n+1) H(+)(in) = a plastoquinol + NADP(+) + n H(+)(out). Its function is as follows. NDH shuttles electrons from NAD(P)H:plastoquinone, via FMN and iron-sulfur (Fe-S) centers, to quinones in the photosynthetic chain and possibly in a chloroplast respiratory chain. The immediate electron acceptor for the enzyme in this species is believed to be plastoquinone. Couples the redox reaction to proton translocation, and thus conserves the redox energy in a proton gradient. This is NAD(P)H-quinone oxidoreductase subunit 5, chloroplastic (ndhF) from Barbarea verna (Land cress).